Consider the following 478-residue polypeptide: Glutamyl-tRNA(Gln) amidotransferase subunit A (478 aa).

Catalysis depends on charge relay system residues lysine 72 and serine 147. Catalysis depends on serine 171, which acts as the Acyl-ester intermediate.

Belongs to the amidase family. GatA subfamily. As to quaternary structure, heterotrimer of A, B and C subunits.

The enzyme catalyses L-glutamyl-tRNA(Gln) + L-glutamine + ATP + H2O = L-glutaminyl-tRNA(Gln) + L-glutamate + ADP + phosphate + H(+). Its function is as follows. Allows the formation of correctly charged Gln-tRNA(Gln) through the transamidation of misacylated Glu-tRNA(Gln) in organisms which lack glutaminyl-tRNA synthetase. The reaction takes place in the presence of glutamine and ATP through an activated gamma-phospho-Glu-tRNA(Gln). The chain is Glutamyl-tRNA(Gln) amidotransferase subunit A from Saccharolobus solfataricus (strain ATCC 35092 / DSM 1617 / JCM 11322 / P2) (Sulfolobus solfataricus).